We begin with the raw amino-acid sequence, 478 residues long: Elongation factor Tu, chloroplastic (478 aa).

The segment covering 1 to 29 (MASISAATATSSTKLVSSNSTNPLLPSST) has biased composition (low complexity). The disordered stretch occupies residues 1–31 (MASISAATATSSTKLVSSNSTNPLLPSSTKP). The transit peptide at 1 to 69 (MASISAATAT…THRHRRFTVR (69 aa)) directs the protein to the chloroplast. The tr-type G domain occupies 79 to 283 (KPHVNIGTIG…AVDSYIPIPV (205 aa)). Positions 88–95 (GHVDHGKT) are G1. 88–95 (GHVDHGKT) is a binding site for GTP. The tract at residues 129 to 133 (GITIN) is G2. The interval 150–153 (DCPG) is G3. GTP-binding positions include 150-154 (DCPGH) and 205-208 (NKQD). Positions 205-208 (NKQD) are G4. The G5 stretch occupies residues 243 to 245 (SAL).

This sequence belongs to the TRAFAC class translation factor GTPase superfamily. Classic translation factor GTPase family. EF-Tu/EF-1A subfamily.

Its subcellular location is the plastid. The protein resides in the chloroplast. In terms of biological role, this protein promotes the GTP-dependent binding of aminoacyl-tRNA to the A-site of ribosomes during protein biosynthesis. This is Elongation factor Tu, chloroplastic (TUFA) from Nicotiana tabacum (Common tobacco).